The sequence spans 108 residues: uncharacterized protein (108 aa).

A disordered region spans residues 81–108 (FKCLDSPPPVPPSSSQGEDEENTVDSQY). Acidic residues predominate over residues 97–108 (GEDEENTVDSQY).

This is an uncharacterized protein from Saccharomyces cerevisiae (strain ATCC 204508 / S288c) (Baker's yeast).